A 610-amino-acid chain; its full sequence is Elongation factor 4 (610 aa).

One can recognise a tr-type G domain in the interval S7 to K189. GTP contacts are provided by residues D19 to T24 and N136 to D139.

Belongs to the TRAFAC class translation factor GTPase superfamily. Classic translation factor GTPase family. LepA subfamily.

Its subcellular location is the cell inner membrane. The catalysed reaction is GTP + H2O = GDP + phosphate + H(+). In terms of biological role, required for accurate and efficient protein synthesis under certain stress conditions. May act as a fidelity factor of the translation reaction, by catalyzing a one-codon backward translocation of tRNAs on improperly translocated ribosomes. Back-translocation proceeds from a post-translocation (POST) complex to a pre-translocation (PRE) complex, thus giving elongation factor G a second chance to translocate the tRNAs correctly. Binds to ribosomes in a GTP-dependent manner. The sequence is that of Elongation factor 4 from Thermus thermophilus (strain ATCC BAA-163 / DSM 7039 / HB27).